Consider the following 539-residue polypeptide: Beta-agarase A (539 aa).

The N-terminal stretch at 1-19 is a signal peptide; the sequence is MKKNYLLLYFIFLLCGSIA. The GH16 domain occupies 21 to 289; that stretch reads QDWNGIPVPA…WIRVYKPVAV (269 aa). Residues Trp-73, 82–92, 96–98, and Glu-144 each bind substrate; these read NAPQAWTNGSQ and QAQ. The active-site Nucleophile is Glu-147. Glu-152 functions as the Proton donor in the catalytic mechanism. Residues Arg-176 and Asp-271 each coordinate substrate. The disordered stretch occupies residues 332–353; that stretch reads WANTNDIGSRDRGASNGRNNIN.

It belongs to the glycosyl hydrolase 16 family. In terms of assembly, monomer. Proteolytically cleaved into mature beta-agarase A catalytic chain (AgaAc).

It is found in the secreted. It catalyses the reaction Hydrolysis of (1-&gt;4)-beta-D-galactosidic linkages in agarose, giving the tetramer as the predominant product.. Functionally, cleaves the beta-1,4-linkages between beta-D-galactose and alpha-L-3,6-anhydro-galactose residues in agarose. Cleaves agarose in a random manner with retention of the anomeric-bond configuration, producing beta-anomers that give rise progressively to alpha-anomers when mutarotation takes place. The polypeptide is Beta-agarase A (agaA) (Zobellia galactanivorans (strain DSM 12802 / CCUG 47099 / CIP 106680 / NCIMB 13871 / Dsij)).